The following is a 147-amino-acid chain: Hemoglobin subunit beta (147 aa).

Position 2 is an N-acetylvaline (Val2). Residues His3 to His147 form the Globin domain. Thr13 carries the phosphothreonine modification. Ser45 carries the phosphoserine modification. N6-acetyllysine is present on Lys60. His64 provides a ligand contact to heme b. Lys83 carries the post-translational modification N6-acetyllysine. Residue His93 coordinates heme b. Residue Cys94 is modified to S-nitrosocysteine. Lys145 bears the N6-acetyllysine mark.

It belongs to the globin family. In terms of assembly, heterotetramer of two alpha chains and two beta chains. As to expression, red blood cells.

Involved in oxygen transport from the lung to the various peripheral tissues. The sequence is that of Hemoglobin subunit beta (HBB) from Scapanus orarius (Coast mole).